The primary structure comprises 359 residues: Dual-specificity RNA methyltransferase RlmN (359 aa).

Glutamate 102 functions as the Proton acceptor in the catalytic mechanism. The Radical SAM core domain occupies 108-351; that stretch reads EKKRATLCIS…IRKNRGSDIQ (244 aa). Residues cysteine 115 and cysteine 354 are joined by a disulfide bond. Cysteine 122, cysteine 126, and cysteine 129 together coordinate [4Fe-4S] cluster. Residues 178-179, serine 210, 232-234, and asparagine 311 each bind S-adenosyl-L-methionine; these read GE and SLH. The S-methylcysteine intermediate role is filled by cysteine 354.

Belongs to the radical SAM superfamily. RlmN family. [4Fe-4S] cluster is required as a cofactor.

The protein localises to the cytoplasm. The catalysed reaction is adenosine(2503) in 23S rRNA + 2 reduced [2Fe-2S]-[ferredoxin] + 2 S-adenosyl-L-methionine = 2-methyladenosine(2503) in 23S rRNA + 5'-deoxyadenosine + L-methionine + 2 oxidized [2Fe-2S]-[ferredoxin] + S-adenosyl-L-homocysteine. It carries out the reaction adenosine(37) in tRNA + 2 reduced [2Fe-2S]-[ferredoxin] + 2 S-adenosyl-L-methionine = 2-methyladenosine(37) in tRNA + 5'-deoxyadenosine + L-methionine + 2 oxidized [2Fe-2S]-[ferredoxin] + S-adenosyl-L-homocysteine. Its function is as follows. Specifically methylates position 2 of adenine 2503 in 23S rRNA and position 2 of adenine 37 in tRNAs. m2A2503 modification seems to play a crucial role in the proofreading step occurring at the peptidyl transferase center and thus would serve to optimize ribosomal fidelity. The polypeptide is Dual-specificity RNA methyltransferase RlmN (Buchnera aphidicola subsp. Cinara cedri (strain Cc)).